The primary structure comprises 480 residues: Bifunctional pantoate ligase/cytidylate kinase (480 aa).

The segment at M1–V243 is pantoate--beta-alanine ligase. An ATP-binding site is contributed by M4–H11. Catalysis depends on H11, which acts as the Proton donor. Q34 contacts (R)-pantoate. Q34 serves as a coordination point for beta-alanine. G123–D126 lines the ATP pocket. Q129 is a binding site for (R)-pantoate. Residues V152 and L160–R163 contribute to the ATP site. Residues F244 to G480 are cytidylate kinase.

It in the N-terminal section; belongs to the pantothenate synthetase family. In the C-terminal section; belongs to the cytidylate kinase family. Type 1 subfamily.

Its subcellular location is the cytoplasm. It carries out the reaction (R)-pantoate + beta-alanine + ATP = (R)-pantothenate + AMP + diphosphate + H(+). The catalysed reaction is CMP + ATP = CDP + ADP. The enzyme catalyses dCMP + ATP = dCDP + ADP. It participates in cofactor biosynthesis; (R)-pantothenate biosynthesis; (R)-pantothenate from (R)-pantoate and beta-alanine: step 1/1. Functionally, catalyzes the condensation of pantoate with beta-alanine in an ATP-dependent reaction via a pantoyl-adenylate intermediate. Its function is as follows. Catalyzes the transfer of a phosphate group from ATP to either CMP or dCMP to form CDP or dCDP and ADP, respectively. The polypeptide is Bifunctional pantoate ligase/cytidylate kinase (Synechococcus sp. (strain CC9605)).